A 593-amino-acid polypeptide reads, in one-letter code: Chromosomal replication initiator protein DnaA (593 aa).

Residues 1-71 are domain I, interacts with DnaA modulators; it reads MSDPCWEQCV…EIISNSDAGP (71 aa). Residues 71-256 form a domain II region; the sequence is PKSLEIAVAQ…DVEGGIQHKH (186 aa). The segment at 97 to 186 is disordered; it reads AVPVPDPLPS…STESSADRER (90 aa). A compositionally biased stretch (polar residues) spans 113-124; that stretch reads SFQPPKGNTSAD. The tract at residues 257–473 is domain III, AAA+ region; the sequence is NLNTTFIFDN…GALKRVIANA (217 aa). Residues Gly301, Gly303, Lys304, and Thr305 each contribute to the ATP site. A domain IV, binds dsDNA region spans residues 474-593; sequence QFTQRSISVE…VKNLLRTLTT (120 aa).

The protein belongs to the DnaA family. In terms of assembly, oligomerizes as a right-handed, spiral filament on DNA at oriC.

The protein localises to the cytoplasm. In terms of biological role, plays an essential role in the initiation and regulation of chromosomal replication. ATP-DnaA binds to the origin of replication (oriC) to initiate formation of the DNA replication initiation complex once per cell cycle. Binds the DnaA box (a 9 base pair repeat at the origin) and separates the double-stranded (ds)DNA. Forms a right-handed helical filament on oriC DNA; dsDNA binds to the exterior of the filament while single-stranded (ss)DNA is stabiized in the filament's interior. The ATP-DnaA-oriC complex binds and stabilizes one strand of the AT-rich DNA unwinding element (DUE), permitting loading of DNA polymerase. After initiation quickly degrades to an ADP-DnaA complex that is not apt for DNA replication. Binds acidic phospholipids. This chain is Chromosomal replication initiator protein DnaA, found in Teredinibacter turnerae (strain ATCC 39867 / T7901).